The following is a 408-amino-acid chain: MANINENYLKLKAGYLFPEISKRVKIYSEKNPSAKIIRLGIGDVTLPIVPSVVDAMVEASKEMGTVGGFHGYGPEQGYSFLLKSIADHDYGSLGIKIDESEIFVSDGSKCDCGNIQEIFSTDSKIAVADPVYPVYVDTNVMAGRTGEIGPDGRYSNLIYMPATKENGFQPEIPKEKADIVYLCYPNNPTGTVTTKESLKAWVEYAKKNNSIILYDSAYEAFISEPGVPRSIYEVEGAKEVAIEFRSFSKTAGFTGLRCAYIVIPKELKGKTRSGEEVSLNSLWNRRHTTKFNGVSYVTQKGAEACYSPQGKKEIQTSIAYYMANASKIRDGLKKAGYEVFGGVNAPYIWLKTSDNLSSWDFFDKLLNKAQVVGTPGSGFGPAGEGYFRLSAFGKKEDVEEAIARITSL.

The substrate site is built by Y15 and G42. Residues Y72, 108 to 109 (SK), Y132, N187, Y218, and 246 to 248 (SFS) each bind pyridoxal 5'-phosphate. Substrate contacts are provided by K109, Y132, and N187. An N6-(pyridoxal phosphate)lysine modification is found at K249. Pyridoxal 5'-phosphate contacts are provided by R257 and N292. Residues N292 and R388 each contribute to the substrate site.

It belongs to the class-I pyridoxal-phosphate-dependent aminotransferase family. LL-diaminopimelate aminotransferase subfamily. In terms of assembly, homodimer. Pyridoxal 5'-phosphate serves as cofactor.

The enzyme catalyses (2S,6S)-2,6-diaminopimelate + 2-oxoglutarate = (S)-2,3,4,5-tetrahydrodipicolinate + L-glutamate + H2O + H(+). The protein operates within amino-acid biosynthesis; L-lysine biosynthesis via DAP pathway; LL-2,6-diaminopimelate from (S)-tetrahydrodipicolinate (aminotransferase route): step 1/1. Involved in the synthesis of meso-diaminopimelate (m-DAP or DL-DAP), required for both lysine and peptidoglycan biosynthesis. Catalyzes the direct conversion of tetrahydrodipicolinate to LL-diaminopimelate. The polypeptide is LL-diaminopimelate aminotransferase (Leptospira interrogans serogroup Icterohaemorrhagiae serovar Lai (strain 56601)).